A 633-amino-acid chain; its full sequence is Electron transfer flavoprotein-ubiquinone oxidoreductase, mitochondrial (633 aa).

Residues 1–90 (MHRFLVKLSS…NGITSSRCIS (90 aa)) constitute a mitochondrion transit peptide. 102-116 (VLIVGAGPAGLSAAI) contacts FAD. Residues 140–161 (VGGHIISGNVFEPLALDELLPH) lie within the membrane without spanning it. A ubiquinone-binding residues include G334 and G335. Residues 401–421 (IPYPVFPGGAIIGCSAGFLNV) lie within the membrane without spanning it. Residues C578, C602, C605, and C608 each coordinate [4Fe-4S] cluster. The 4Fe-4S ferredoxin-type domain occupies 593-622 (PKLQINAQNCLHCKACDIKDPKQNIEWTVP).

Belongs to the ETF-QO/FixC family. The cofactor is [4Fe-4S] cluster. Requires FAD as cofactor.

The protein localises to the mitochondrion inner membrane. The catalysed reaction is a ubiquinone + reduced [electron-transfer flavoprotein] = a ubiquinol + oxidized [electron-transfer flavoprotein] + H(+). Up-regulated by KIN10, by S1-bZIP specific dimers, and also by C/S1 bZIP heterodimers. Functionally, accepts electrons from ETF and reduces ubiquinone. May act downstream of IVD and D2HGDH in the degradation of phytol or chlorophyll during dark-induced senescence and sugar starvation. The protein is Electron transfer flavoprotein-ubiquinone oxidoreductase, mitochondrial (ETFQO) of Arabidopsis thaliana (Mouse-ear cress).